The following is a 268-amino-acid chain: 1D-myo-inositol 2-acetamido-2-deoxy-alpha-D-glucopyranoside deacetylase (268 aa).

Zn(2+)-binding residues include H7, D10, and H142.

It belongs to the MshB deacetylase family. The cofactor is Zn(2+).

The catalysed reaction is 1D-myo-inositol 2-acetamido-2-deoxy-alpha-D-glucopyranoside + H2O = 1D-myo-inositol 2-amino-2-deoxy-alpha-D-glucopyranoside + acetate. In terms of biological role, catalyzes the deacetylation of 1D-myo-inositol 2-acetamido-2-deoxy-alpha-D-glucopyranoside (GlcNAc-Ins) in the mycothiol biosynthesis pathway. The protein is 1D-myo-inositol 2-acetamido-2-deoxy-alpha-D-glucopyranoside deacetylase of Saccharomonospora viridis (strain ATCC 15386 / DSM 43017 / JCM 3036 / CCUG 5913 / NBRC 12207 / NCIMB 9602 / P101) (Thermoactinomyces viridis).